Consider the following 210-residue polypeptide: Dephospho-CoA kinase (210 aa).

One can recognise a DPCK domain in the interval 4-202 (WVGLTGGIGS…AFYSGIFASK (199 aa)). 12–17 (GSGKSA) contributes to the ATP binding site.

This sequence belongs to the CoaE family.

It is found in the cytoplasm. It carries out the reaction 3'-dephospho-CoA + ATP = ADP + CoA + H(+). Its pathway is cofactor biosynthesis; coenzyme A biosynthesis; CoA from (R)-pantothenate: step 5/5. Its function is as follows. Catalyzes the phosphorylation of the 3'-hydroxyl group of dephosphocoenzyme A to form coenzyme A. The polypeptide is Dephospho-CoA kinase (Neisseria meningitidis serogroup B (strain ATCC BAA-335 / MC58)).